Consider the following 298-residue polypeptide: ADP/ATP translocase 2 (298 aa).

M1 carries the N-acetylmethionine modification. Residues 1–7 lie on the Mitochondrial intermembrane side of the membrane; sequence MTDAAVS. N-acetylthreonine; in ADP/ATP translocase 2, N-terminally processed is present on T2. A Solcar 1 repeat occupies 6 to 98; that stretch reads VSFAKDFLAG…FAFKDKYKQI (93 aa). The residue at position 7 (S7) is a Phosphoserine. The helical transmembrane segment at 8-37 threads the bilayer; the sequence is FAKDFLAGGVAAAISKTAVAPIERVKLLLQ. K23 carries the N6-malonyllysine modification. At 38–74 the chain is on the mitochondrial matrix side; the sequence is VQHASKQITADKQYKGIMDCVVRIPKEQGVLSFWRGN. Position 43 is an N6-succinyllysine (K43). K52 is modified (N6,N6,N6-trimethyllysine; alternate). K52 carries the N6,N6-dimethyllysine; alternate modification. K52 bears the N6-methyllysine; alternate mark. A helical membrane pass occupies residues 75-99; that stretch reads LANVIRYFPTQALNFAFKDKYKQIF. The ADP site is built by R80 and K92. N6-malonyllysine is present on residues K92 and K96. Over 100–109 the chain is Mitochondrial intermembrane; that stretch reads LGGVDKRTQF. K105 is subject to N6-acetyllysine; alternate. K105 is subject to N6-succinyllysine; alternate. A helical transmembrane segment spans residues 110-130; that stretch reads WRYFAGNLASGGAAGATSLCF. 2 Solcar repeats span residues 111 to 201 and 212 to 297; these read RYFA…AKGM and ISWM…IKKY. Over 131-178 the chain is Mitochondrial matrix; it reads VYPLDFARTRLAADVGKAGDAREFKGLGDCLVKITKSDGIRGLYQGFN. N6-methyllysine; alternate is present on K147. Residues K147 and K155 each carry the N6-acetyllysine; alternate modification. An N6-succinyllysine; alternate mark is found at K147 and K155. The residue at position 147 (K147) is an N6-malonyllysine; alternate. An N6-acetyllysine mark is found at K163 and K166. Residues 179 to 199 traverse the membrane as a helical segment; it reads VSVQGIIIYRAAYFGIYDTAK. At 200–210 the chain is on the mitochondrial intermembrane side; that stretch reads GMLPDPKNTHI. A helical membrane pass occupies residues 211 to 231; that stretch reads FISWMIAQSVTAVAGLTSYPF. Over 232-273 the chain is Mitochondrial matrix; it reads DTVRRRMMMQSGRKGSDIMYTGTIDCWKKIARDEGSKAFFKG. ADP is bound at residue R235. The tract at residues 235–240 is important for transport activity; sequence RRRMMM. Residues 235 to 240 carry the Nucleotide carrier signature motif motif; that stretch reads RRRMMM. At K268 the chain carries N6-acetyllysine; alternate. K268 carries the post-translational modification N6-succinyllysine; alternate. A helical transmembrane segment spans residues 274–291; sequence AWSNVLRGMGGAFVLVLY. The Mitochondrial intermembrane portion of the chain corresponds to 292–298; it reads DEIKKYT.

This sequence belongs to the mitochondrial carrier (TC 2.A.29) family. Monomer. Component of the MMXD complex, which includes CIAO1, ERCC2, CIAO2B, MMS19 and SLC25A5/ANT2. Interacts with AK4. Interacts with TIMM44; leading to inhibit the presequence translocase TIMM23, thereby promoting stabilization of PINK1. Trimethylated by ANTKMT at Lys-52.

The protein resides in the mitochondrion inner membrane. Its subcellular location is the membrane. It carries out the reaction ADP(in) + ATP(out) = ADP(out) + ATP(in). The catalysed reaction is H(+)(in) = H(+)(out). Its activity is regulated as follows. The matrix-open state (m-state) is inhibited by the membrane-permeable bongkrekic acid (BKA). The cytoplasmic-open state (c-state) is inhibited by the membrane-impermeable toxic inhibitor carboxyatractyloside (CATR). Proton transporter activity is inhibited by ADP:ATP antiporter activity. In terms of biological role, ADP:ATP antiporter that mediates import of ADP into the mitochondrial matrix for ATP synthesis, and export of ATP out to fuel the cell. Cycles between the cytoplasmic-open state (c-state) and the matrix-open state (m-state): operates by the alternating access mechanism with a single substrate-binding site intermittently exposed to either the cytosolic (c-state) or matrix (m-state) side of the inner mitochondrial membrane. In addition to its ADP:ATP antiporter activity, also involved in mitochondrial uncoupling and mitochondrial permeability transition pore (mPTP) activity. Plays a role in mitochondrial uncoupling by acting as a proton transporter: proton transport uncouples the proton flows via the electron transport chain and ATP synthase to reduce the efficiency of ATP production and cause mitochondrial thermogenesis. Proton transporter activity is inhibited by ADP:ATP antiporter activity, suggesting that SLC25A5/ANT2 acts as a master regulator of mitochondrial energy output by maintaining a delicate balance between ATP production (ADP:ATP antiporter activity) and thermogenesis (proton transporter activity). Proton transporter activity requires free fatty acids as cofactor, but does not transport it. Probably mediates mitochondrial uncoupling in tissues that do not express UCP1. Also plays a key role in mPTP opening, a non-specific pore that enables free passage of the mitochondrial membranes to solutes of up to 1.5 kDa, and which contributes to cell death. It is however unclear if SLC25A5/ANT2 constitutes a pore-forming component of mPTP or regulates it. Acts as a regulator of mitophagy independently of ADP:ATP antiporter activity: promotes mitophagy via interaction with TIMM44, leading to inhibit the presequence translocase TIMM23, thereby promoting stabilization of PINK1. As part of the mitotic spindle-associated MMXD complex it may play a role in chromosome segregation. In Tachyglossus aculeatus aculeatus (Southeast Australian short-beaked echidna), this protein is ADP/ATP translocase 2.